The sequence spans 445 residues: Transcriptional enhancer factor TEF-4 (445 aa).

Disordered regions lie at residues 1 to 47 (MGDP…VWSP) and 191 to 217 (PPAS…SPPA). Residues 25-37 (EGTGGSEGVGGDG) are compositionally biased toward gly residues. The TEA DNA-binding region spans 38–114 (SPDAEGVWSP…QVLARRKSRE (77 aa)). A transcriptional activation region spans residues 172–445 (WNVPDVKPFS…QYHIYRLVRD (274 aa)). The segment covering 199 to 216 (YEPPPALSPLPPPAPSPP) has biased composition (pro residues).

Interacts with YAP1 and WWTR1/TAZ. Highest expression in brain. High levels also found in lung, testis and ovarian follicle cells. Lower levels in heart and spleen.

It localises to the nucleus. Its function is as follows. Transcription factor which plays a key role in the Hippo signaling pathway, a pathway involved in organ size control and tumor suppression by restricting proliferation and promoting apoptosis. The core of this pathway is composed of a kinase cascade wherein MST1/MST2, in complex with its regulatory protein SAV1, phosphorylates and activates LATS1/2 in complex with its regulatory protein MOB1, which in turn phosphorylates and inactivates YAP1 oncoprotein and WWTR1/TAZ. Acts by mediating gene expression of YAP1 and WWTR1/TAZ, thereby regulating cell proliferation, migration and epithelial mesenchymal transition (EMT) induction. Binds to the SPH and GT-IIC 'enhansons' (5'-GTGGAATGT-3'). May be involved in the gene regulation of neural development. Binds to the M-CAT motif. This chain is Transcriptional enhancer factor TEF-4 (Tead2), found in Mus musculus (Mouse).